A 452-amino-acid chain; its full sequence is Probable dihydrolipoyllysine-residue succinyltransferase component of 2-oxoglutarate dehydrogenase complex, mitochondrial (452 aa).

In terms of domain architecture, Lipoyl-binding spans 42–117 (STRIKTPPFP…TIDQDIAVID (76 aa)). The residue at position 83 (Lys83) is an N6-lipoyllysine. The tract at residues 119–225 (SAAPPEGGSA…FSRNEDRVKM (107 aa)) is disordered. Basic and acidic residues-rich tracts occupy residues 130 to 144 (PKKD…DAAK), 154 to 170 (KPIE…EQKE), and 195 to 209 (AKSE…KATE). Catalysis depends on residues His424 and Asp428.

This sequence belongs to the 2-oxoacid dehydrogenase family. Requires (R)-lipoate as cofactor.

It is found in the mitochondrion. The catalysed reaction is N(6)-[(R)-dihydrolipoyl]-L-lysyl-[protein] + succinyl-CoA = N(6)-[(R)-S(8)-succinyldihydrolipoyl]-L-lysyl-[protein] + CoA. The protein operates within amino-acid degradation; L-lysine degradation via saccharopine pathway; glutaryl-CoA from L-lysine: step 6/6. Its function is as follows. The 2-oxoglutarate dehydrogenase complex catalyzes the overall conversion of 2-oxoglutarate to succinyl-CoA and CO(2). It contains multiple copies of three enzymatic components: 2-oxoglutarate dehydrogenase (E1), dihydrolipoamide succinyltransferase (E2) and lipoamide dehydrogenase (E3). The polypeptide is Probable dihydrolipoyllysine-residue succinyltransferase component of 2-oxoglutarate dehydrogenase complex, mitochondrial (kgd2) (Schizosaccharomyces pombe (strain 972 / ATCC 24843) (Fission yeast)).